A 547-amino-acid chain; its full sequence is Probable terpene synthase 3 (547 aa).

D298, D302, and E451 together coordinate Mg(2+). The DDXXD motif motif lies at 298-302 (DDIYD).

Belongs to the terpene synthase family. The cofactor is Mg(2+).

In terms of biological role, probable sesquiterpene synthase. This Ricinus communis (Castor bean) protein is Probable terpene synthase 3 (TPS3).